A 126-amino-acid polypeptide reads, in one-letter code: Fluoride-specific ion channel FluC (126 aa).

Transmembrane regions (helical) follow at residues 5–25, 39–59, 69–89, and 103–123; these read FILA…LVGI, TLFI…LFAV, IFLV…SLDT, and AYMI…IQIV. Residues Gly-77 and Thr-80 each coordinate Na(+).

This sequence belongs to the fluoride channel Fluc/FEX (TC 1.A.43) family.

Its subcellular location is the cell inner membrane. It catalyses the reaction fluoride(in) = fluoride(out). With respect to regulation, na(+) is not transported, but it plays an essential structural role and its presence is essential for fluoride channel function. Fluoride-specific ion channel. Important for reducing fluoride concentration in the cell, thus reducing its toxicity. In Nitrobacter winogradskyi (strain ATCC 25391 / DSM 10237 / CIP 104748 / NCIMB 11846 / Nb-255), this protein is Fluoride-specific ion channel FluC.